Consider the following 941-residue polypeptide: Cilia- and flagella-associated protein 69 (941 aa).

A compositionally biased stretch (low complexity) spans M1 to E14. Residues M1–Q26 are disordered. Polar residues predominate over residues G16–Q26.

Highly expressed in the testis, specifically in sperm (at protein level). Expressed in the brain, kidney, liver, lung, and intestine.

Its subcellular location is the cell projection. The protein localises to the cilium. It localises to the flagellum. In terms of biological role, cilium- and flagellum-associated protein. In the olfactory epithelium, regulates the speed of activation and termination of the odor response and thus contributes to the robustness of olfactory transduction pathways. Required for sperm flagellum assembly and stability. This chain is Cilia- and flagella-associated protein 69, found in Homo sapiens (Human).